The primary structure comprises 414 residues: MTQANLSETLFKPRFKHPETSTLVRRFNHGAQPPVQSALDGKTIPHWYRMINRLMWIWRGIDPREILDVQARIVMSDAERTDDDLYDTVIGYRGGNWIYEWATQAMVWQQKACAEDDPQLSGRHWLHAATLYNIAAYPHLKGDDLAEQAQALSNRAYEEAAQRLPGTMRQMEFTVPGGAPITGFLHMPKGDGPFPTVLMCGGLDAMQTDYYSLYERYFAPRGIAMLTIDMPSVGFSSKWKLTQDSSLLHQHVLKALPNVPWVDHTRVAAFGFRFGANVAVRLAYLESPRLKAVACLGPVVHTLLSDFKCQQQVPEMYLDVLASRLGMHDASDEALRVELNRYSLKVQGLLGRRCPTPMLSGYWKNDPFSPEEDSRLITSSSADGKLLEIPFNPVYRNFDKGLQEITDWIEKRLC.

Belongs to the FrsA family.

The enzyme catalyses a carboxylic ester + H2O = an alcohol + a carboxylate + H(+). Its function is as follows. Catalyzes the hydrolysis of esters. The sequence is that of Esterase FrsA from Escherichia coli (strain K12 / DH10B).